A 301-amino-acid chain; its full sequence is 2-methylisocitrate lyase (301 aa).

A substrate-binding site is contributed by Ser53–Ala55. Positions 92 and 94 each coordinate Mg(2+). Residues Cys129 to Gly130, Arg162, Glu192, Asn214 to Thr216, Arg245, and Arg274 contribute to the substrate site.

It belongs to the isocitrate lyase/PEP mutase superfamily. Methylisocitrate lyase family. It depends on Mg(2+) as a cofactor.

It carries out the reaction 3-hydroxybutane-1,2,3-tricarboxylate = pyruvate + succinate. In terms of biological role, involved in the methylcitric acid cycle. Catalyzes the cleavage of 2-methylisocitrate to yield pyruvate and succinate. The polypeptide is 2-methylisocitrate lyase (Bacillus subtilis (strain 168)).